The chain runs to 402 residues: Zinc finger protein CONSTANS-LIKE 14 (402 aa).

Zn(2+) is bound by residues cysteine 12, cysteine 15, cysteine 35, histidine 40, cysteine 55, cysteine 58, cysteine 78, and histidine 83. Residues 12–54 (CEFCGERTAVLFCRADTAKLCLPCDQHVHSANLLSRKHVRSQI) form a B box-type 1; atypical zinc finger. The B box-type 2; atypical zinc finger occupies 55–97 (CDNCSKEPVSVRCFTDNLVLCQECDWDVHGSCSSSATHERSAV). The tract at residues 287-322 (SYQQEDSVHSTSTKGQETSKSNNIPAAIHSHKSSND) is disordered. Residues 295–310 (HSTSTKGQETSKSNNI) show a composition bias toward polar residues. Residues 345 to 372 (VTNADLEQMAQNRDNAMQRYKEKKKTRR) are a coiled coil. One can recognise a CCT domain in the interval 357–399 (RDNAMQRYKEKKKTRRYDKTIRYETRKARAETRLRVKGRFVKA).

It belongs to the CONSTANS family.

It is found in the nucleus. This is Zinc finger protein CONSTANS-LIKE 14 (COL14) from Arabidopsis thaliana (Mouse-ear cress).